A 1025-amino-acid polypeptide reads, in one-letter code: Synapsin (1025 aa).

Disordered stretches follow at residues 1-94 (MKRG…SRES), 439-784 (VCRP…NYGS), 872-910 (YDSNSIASQGEGLNNPSDLPSYTRPSYSRSESNASKHSD), and 995-1025 (DFSDSGSMSSIGSHTKRWSASKEEDDELDLK). The segment covering 34 to 52 (TKPPVAGGPPNMPPPPAPG) has biased composition (pro residues). Residues 454–463 (SRSSVSSRAE) are compositionally biased toward low complexity. Residues 472-492 (PTPPLPAGPRPAPMGGPPPIP) are compositionally biased toward pro residues. Composition is skewed to low complexity over residues 499–546 (VGSI…SSVS) and 594–626 (SETSSGSGPGSVPSSAGPGSGFSSSFLGKQFSF). Ser-539 is subject to Phosphoserine. Polar residues predominate over residues 651–673 (TTASSAVRPESSVSVSDSRNTDT). Over residues 690–702 (QQERVNPFDKEPS) the composition is skewed to basic and acidic residues. Over residues 703 to 725 (KSGSAASIHTSSSSSISSSSISS) the composition is skewed to low complexity. Residues 726–735 (RINRNGNAIQ) are compositionally biased toward polar residues. The span at 736-749 (SPPPPAGPPPPPPT) shows a compositional bias: pro residues. Over residues 750–759 (NVTAVGSNAN) the composition is skewed to polar residues. A compositionally biased stretch (low complexity) spans 760–772 (SSSGYRNSFSSSL). Positions 872–904 (YDSNSIASQGEGLNNPSDLPSYTRPSYSRSESN) are enriched in polar residues. A compositionally biased stretch (low complexity) spans 995-1007 (DFSDSGSMSSIGS).

Belongs to the synapsin family. As to quaternary structure, identified in a complex with Syt1 and nwk. Widely expressed in the embryonic and adult nervous system synaptic terminals.

The protein localises to the synapse. Functionally, plays a significant role in nervous system function, which is subtle at the cellular level but manifests itself in complex behavior. This chain is Synapsin (Syn), found in Drosophila melanogaster (Fruit fly).